A 90-amino-acid polypeptide reads, in one-letter code: UPF0386 protein Rru_A2144 (90 aa).

It belongs to the UPF0386 family.

The chain is UPF0386 protein Rru_A2144 from Rhodospirillum rubrum (strain ATCC 11170 / ATH 1.1.1 / DSM 467 / LMG 4362 / NCIMB 8255 / S1).